Here is a 44-residue protein sequence, read N- to C-terminus: 2S seed storage albumin protein (44 aa).

2 cysteine pairs are disulfide-bonded: Cys7-Cys42 and Cys19-Cys31.

It belongs to the 2S seed storage albumins family. The mature protein consists of a small and a large chain linked by 2 disulfide bonds.

In terms of biological role, this is a 2S seed storage protein. Has antifungal activity. Inhibits spore germination in H.sativum (IC(50)=62.5 ug/ml) and P.betae (IC(50)=62.5 ug/ml). Inhibits growth of H.sativum, V.albo-atrum and P.infestans. This chain is 2S seed storage albumin protein, found in Taraxacum officinale (Common dandelion).